Here is a 345-residue protein sequence, read N- to C-terminus: L-threonine 3-dehydrogenase (345 aa).

Cys42 provides a ligand contact to Zn(2+). Active-site charge relay system residues include Thr44 and His47. Residues His67, Glu68, Cys97, Cys100, Cys103, and Cys111 each coordinate Zn(2+). NAD(+)-binding positions include Ile179, Asp199, Arg204, 266 to 268 (LGI), and 290 to 291 (IY).

This sequence belongs to the zinc-containing alcohol dehydrogenase family. Homotetramer. Requires Zn(2+) as cofactor.

The protein localises to the cytoplasm. It catalyses the reaction L-threonine + NAD(+) = (2S)-2-amino-3-oxobutanoate + NADH + H(+). It functions in the pathway amino-acid degradation; L-threonine degradation via oxydo-reductase pathway; glycine from L-threonine: step 1/2. Its function is as follows. Catalyzes the NAD(+)-dependent oxidation of L-threonine to 2-amino-3-ketobutyrate. The polypeptide is L-threonine 3-dehydrogenase (Rhizobium rhizogenes (strain K84 / ATCC BAA-868) (Agrobacterium radiobacter)).